The sequence spans 172 residues: Chromosome-anchoring protein RacA (172 aa).

The H-T-H motif DNA-binding region spans 5–25; that stretch reads TSDVAIRLGVSPKTIQRWVRK. 2 disordered regions span residues 57–76 and 142–172; these read AAME…RNNI and QLNN…GLFA. Pro residues predominate over residues 62-71; that stretch reads PPTPKRPPTP. Positions 83–146 form a coiled coil; that stretch reads ESIEPEIARV…ARLEQQLNNR (64 aa). Residues 142–151 are compositionally biased toward polar residues; it reads QLNNRPPSSH.

This sequence belongs to the RacA family.

It is found in the cytoplasm. Required for the formation of axial filaments and for anchoring the origin regions at the cell poles in sporulating cells, thus ensuring proper chromosome segregation in the prespore. Binds in a dispersed manner throughout the chromosome but preferentially to sites clustered in the origin portion of the chromosome, causing condensation of the chromosome and its remodeling into an elongated, anchored structure. In Geobacillus kaustophilus (strain HTA426), this protein is Chromosome-anchoring protein RacA.